A 543-amino-acid polypeptide reads, in one-letter code: CTP synthase (543 aa).

The segment at 1–265 is amidoligase domain; the sequence is MARYIFITGG…DDEVLAAFGI (265 aa). Position 13 (Ser-13) interacts with CTP. Ser-13 contributes to the UTP binding site. 14–19 provides a ligand contact to ATP; that stretch reads SLGKGL. Tyr-54 serves as a coordination point for L-glutamine. Asp-71 lines the ATP pocket. Mg(2+)-binding residues include Asp-71 and Glu-139. Residues 146–148, 186–191, and Lys-222 contribute to the CTP site; these read DIE and KTKPTQ. UTP-binding positions include 186–191 and Lys-222; that span reads KTKPTQ. Residue 238–240 coordinates ATP; sequence RDV. Positions 291–542 constitute a Glutamine amidotransferase type-1 domain; the sequence is TIAIVGKYTG…VQAAVVQSRL (252 aa). Gly-353 is a binding site for L-glutamine. The active-site Nucleophile; for glutamine hydrolysis is Cys-380. L-glutamine is bound by residues 381–384, Glu-404, and Arg-470; that span reads FGMQ. Residues His-515 and Glu-517 contribute to the active site.

It belongs to the CTP synthase family. In terms of assembly, homotetramer.

It catalyses the reaction UTP + L-glutamine + ATP + H2O = CTP + L-glutamate + ADP + phosphate + 2 H(+). The catalysed reaction is L-glutamine + H2O = L-glutamate + NH4(+). The enzyme catalyses UTP + NH4(+) + ATP = CTP + ADP + phosphate + 2 H(+). It participates in pyrimidine metabolism; CTP biosynthesis via de novo pathway; CTP from UDP: step 2/2. With respect to regulation, allosterically activated by GTP, when glutamine is the substrate; GTP has no effect on the reaction when ammonia is the substrate. The allosteric effector GTP functions by stabilizing the protein conformation that binds the tetrahedral intermediate(s) formed during glutamine hydrolysis. Inhibited by the product CTP, via allosteric rather than competitive inhibition. Its function is as follows. Catalyzes the ATP-dependent amination of UTP to CTP with either L-glutamine or ammonia as the source of nitrogen. Regulates intracellular CTP levels through interactions with the four ribonucleotide triphosphates. This is CTP synthase from Rhodopseudomonas palustris (strain BisB18).